Reading from the N-terminus, the 515-residue chain is Ribosome assembly protein 4 (515 aa).

The interaction with MDN1 stretch occupies residues 20–128; sequence REVAIIPKDL…LLYTPRAVFK (109 aa). The segment at 29–125 is ubiquitin-like (UBL) domain; sequence LPNVSIKFQA…QITLLYTPRA (97 aa). 8 WD repeats span residues 141–181, 184–223, 227–273, 276–314, 352–396, 400–439, 442–481, and 484–515; these read GHGS…PMHT, GHYN…CLGD, GHSK…CQYT, GHTN…RCIN, AQKK…KPIA, GHQK…FIST, GHVA…LSVD, and GHKD…LWTH.

It belongs to the NLE1/RSA4 family. Associates with the pre-60S ribosomal particle. Interacts (via WD repeats) with uL18 (RPL5). Interacts (via UBL domain) with MDN1 (via VWFA/MIDAS domain). Interacts (via WD repeats) with NSA2.

The protein localises to the nucleus. The protein resides in the nucleolus. Functionally, involved in ribosome biogenesis. Required for processing and efficient intra-nuclear transport of pre-60S ribosomal subunits. Interacts with the AAA-ATPase Midasin (MDN1/REA1), which is essential for the ATP-dependent dissociation of a group of nonribosomal factors from the pre-60S particle. This Saccharomyces cerevisiae (strain ATCC 204508 / S288c) (Baker's yeast) protein is Ribosome assembly protein 4.